The sequence spans 977 residues: Structural protein ORF43 (977 aa).

Residues 531–556 are disordered; the sequence is DNDNINKQQQQQRERNDDDDDDDDST.

This sequence belongs to the ascovirus HvAV ORF146 family.

The protein resides in the virion. The chain is Structural protein ORF43 from Noctuidae (owlet moths).